The primary structure comprises 424 residues: UPF0597 protein Shew185_3080 (424 aa).

Belongs to the UPF0597 family.

The sequence is that of UPF0597 protein Shew185_3080 from Shewanella baltica (strain OS185).